The primary structure comprises 340 residues: Serpentine receptor class alpha-23 (340 aa).

Transmembrane regions (helical) follow at residues 34–54 (FISTIVLISYCFSWLAIQALW), 114–136 (YFYYLTNYFSTYSVFSLTFDRLI), 150–170 (FIAISLLVLQFLLAILSFYIA), 199–219 (VRTVVMVSCIIVTGFAYYLSV), 250–270 (ILIVLQFSCTMISSFGVNLLL), and 284–304 (VGAFLPGVAYANLCLPLAIYF).

It belongs to the nematode receptor-like protein sra family.

It is found in the membrane. The polypeptide is Serpentine receptor class alpha-23 (sra-23) (Caenorhabditis elegans).